A 427-amino-acid polypeptide reads, in one-letter code: uncharacterized protein (427 aa).

This sequence belongs to the CAF1 family.

This is an uncharacterized protein from Schizosaccharomyces pombe (strain 972 / ATCC 24843) (Fission yeast).